The following is a 75-amino-acid chain: SPbeta prophage-derived uncharacterized protein YomT (75 aa).

In Bacillus subtilis (strain 168), this protein is SPbeta prophage-derived uncharacterized protein YomT (yomT).